The primary structure comprises 82 residues: MLKIRLTRIGAPKKPCYRIIVTEARSPRDATYTDLVGTYNPMTNPETVIINAEKVLYWIGKGAQPTDTVARLLKKAGIVNSN.

It belongs to the bacterial ribosomal protein bS16 family.

The chain is Small ribosomal subunit protein bS16 from Dehalococcoides mccartyi (strain ATCC BAA-2100 / JCM 16839 / KCTC 5957 / BAV1).